The chain runs to 392 residues: 8-amino-7-oxononanoate synthase (392 aa).

Position 21 (Arg-21) interacts with substrate. Residue 114–115 participates in pyridoxal 5'-phosphate binding; sequence GY. Position 139 (His-139) interacts with substrate. Pyridoxal 5'-phosphate contacts are provided by residues Ser-187, 212–215, and 243–246; these read DEAH and TFGK. Position 246 is an N6-(pyridoxal phosphate)lysine (Lys-246). Thr-359 provides a ligand contact to substrate.

It belongs to the class-II pyridoxal-phosphate-dependent aminotransferase family. BioF subfamily. As to quaternary structure, homodimer. Requires pyridoxal 5'-phosphate as cofactor.

It catalyses the reaction 6-carboxyhexanoyl-[ACP] + L-alanine + H(+) = (8S)-8-amino-7-oxononanoate + holo-[ACP] + CO2. It functions in the pathway cofactor biosynthesis; biotin biosynthesis. In terms of biological role, catalyzes the decarboxylative condensation of pimeloyl-[acyl-carrier protein] and L-alanine to produce 8-amino-7-oxononanoate (AON), [acyl-carrier protein], and carbon dioxide. This is 8-amino-7-oxononanoate synthase from Chlorobaculum parvum (strain DSM 263 / NCIMB 8327) (Chlorobium vibrioforme subsp. thiosulfatophilum).